A 335-amino-acid polypeptide reads, in one-letter code: Fimbrial adhesin PapGIII (335 aa).

Positions 1–21 (MKKWLPAFLFLSLSGCNDALA) are cleaved as a signal peptide.

The protein belongs to the adhesin PapG family.

The protein resides in the secreted. It is found in the fimbrium. Tip adhesin component of type P pili that binds preferentially to Gal-alpha(1-4)-Gal-containing glycolipids such as globoside. This tip is common in E.coli strains that cause human cystitis, but rare in pyelonephritic isolates. In Escherichia coli, this protein is Fimbrial adhesin PapGIII.